The chain runs to 753 residues: Probable phosphoenolpyruvate synthase (753 aa).

Catalysis depends on His-398, which acts as the Tele-phosphohistidine intermediate. Residues Arg-488, Arg-535, Glu-631, Gly-653, Thr-654, Asn-655, and Asp-656 each coordinate substrate. Glu-631 lines the Mg(2+) pocket. Residue Asp-656 coordinates Mg(2+). Cys-703 (proton donor) is an active-site residue.

It belongs to the PEP-utilizing enzyme family. The cofactor is Mg(2+).

It catalyses the reaction pyruvate + ATP + H2O = phosphoenolpyruvate + AMP + phosphate + 2 H(+). Its pathway is carbohydrate biosynthesis; gluconeogenesis. Its function is as follows. Catalyzes the phosphorylation of pyruvate to phosphoenolpyruvate. The polypeptide is Probable phosphoenolpyruvate synthase (ppsA) (Archaeoglobus fulgidus (strain ATCC 49558 / DSM 4304 / JCM 9628 / NBRC 100126 / VC-16)).